The following is a 340-amino-acid chain: Ornithine carbamoyltransferase (340 aa).

Carbamoyl phosphate contacts are provided by residues 57-60 (STRT), Gln-84, Arg-108, and 135-138 (HPTQ). Residues Asn-167, Asp-231, and 235-236 (SM) contribute to the L-ornithine site. Residues 272–273 (CL) and Arg-317 each bind carbamoyl phosphate.

It belongs to the aspartate/ornithine carbamoyltransferase superfamily. OTCase family.

The protein resides in the cytoplasm. The catalysed reaction is carbamoyl phosphate + L-ornithine = L-citrulline + phosphate + H(+). It functions in the pathway amino-acid biosynthesis; L-arginine biosynthesis; L-arginine from L-ornithine and carbamoyl phosphate: step 1/3. In terms of biological role, reversibly catalyzes the transfer of the carbamoyl group from carbamoyl phosphate (CP) to the N(epsilon) atom of ornithine (ORN) to produce L-citrulline. The protein is Ornithine carbamoyltransferase (argF) of Lactiplantibacillus plantarum (strain ATCC BAA-793 / NCIMB 8826 / WCFS1) (Lactobacillus plantarum).